A 169-amino-acid chain; its full sequence is Fumarase E (169 aa).

The protein belongs to the MtlR/FumE family.

It carries out the reaction (S)-malate = fumarate + H2O. In vitro catalyzes the addition of water to fumarate, forming malate. Cannot catalyze the reverse reaction. Cannot use the cis-isomer maleate as substrate. The sequence is that of Fumarase E from Escherichia coli (strain K12).